The chain runs to 60 residues: Mastoparan-B (60 aa).

An N-terminal signal peptide occupies residues 1-27 (MKNTILILFTAFIALLGFFGMSAEALA). 4 AXPX repeats span residues 27–30 (ADPL), 31–34 (AEPL), 35–38 (ADPN), and 41–44 (ADPE). The propeptide occupies 28–45 (DPLAEPLADPNAEADPEA). Leu59 carries the post-translational modification Leucine amide.

The protein belongs to the MCD family. Mastoparan subfamily. In terms of tissue distribution, expressed by the venom gland.

It localises to the secreted. The protein resides in the target cell membrane. Antimicrobial and mast cell degranulating peptide. Has broad spectrum antibacterial activity against both Gram-positive (S.aureus MIC=96-128 ug/ml, S.xylosus MIC=2 ug/ml, S.alactolyticus MIC=32 ug/ml, and S.choleraesuis MIC=32 ug/ml) and Gram-negative bacteria (C.koseri MIC=6 ug/ml, E.coli MIC=3-16 ug/ml, K.pneumoniae MIC=128 ug/ml, P.aerugiosa MIC=128 ug/ml, S.typhimurium MIC=64 ug/ml, V.parahamelytics MIC=32 ug/ml, and S.enterica), as well as on fungi (C.albicans, C.glabrata, and C.neoformans). Does not show antimicrobial activity against S.mutans. Affects membrane permeability of E.coli. Also acts as a mast cell degranulating peptide, that causes liberation of histamine from rat peritoneal mast cells. Its mast cell degranulation activity may be related to the activation of G-protein coupled receptors in mast cells as well as interaction with other proteins located in cell endosomal membranes in the mast cells. Whether this peptide shows hemolytic activities is controversial, as Lin et al., 2011 and Ho et al., 1991 found a hemolytic activity on sheep, chicken and human erythrocytes, whereas Kim et al., 2016 found no hemolytic activity on human erythrocytes. In vivo, induces edema in the rat paw. In Vespa basalis (Hornet), this protein is Mastoparan-B.